A 127-amino-acid chain; its full sequence is Large ribosomal subunit protein uL24A (127 aa).

It belongs to the universal ribosomal protein uL24 family. Component of the large ribosomal subunit (LSU). Mature yeast ribosomes consist of a small (40S) and a large (60S) subunit. The 40S small subunit contains 1 molecule of ribosomal RNA (18S rRNA) and 33 different proteins (encoded by 57 genes). The large 60S subunit contains 3 rRNA molecules (25S, 5.8S and 5S rRNA) and 46 different proteins (encoded by 81 genes).

Its subcellular location is the cytoplasm. Its function is as follows. Component of the ribosome, a large ribonucleoprotein complex responsible for the synthesis of proteins in the cell. The small ribosomal subunit (SSU) binds messenger RNAs (mRNAs) and translates the encoded message by selecting cognate aminoacyl-transfer RNA (tRNA) molecules. The large subunit (LSU) contains the ribosomal catalytic site termed the peptidyl transferase center (PTC), which catalyzes the formation of peptide bonds, thereby polymerizing the amino acids delivered by tRNAs into a polypeptide chain. The nascent polypeptides leave the ribosome through a tunnel in the LSU and interact with protein factors that function in enzymatic processing, targeting, and the membrane insertion of nascent chains at the exit of the ribosomal tunnel. In Saccharomyces cerevisiae (strain ATCC 204508 / S288c) (Baker's yeast), this protein is Large ribosomal subunit protein uL24A.